A 31-amino-acid chain; its full sequence is Dermaseptin-7.2TR (31 aa).

Glu31 carries the glutamic acid 1-amide modification.

Expressed by the skin glands.

It localises to the secreted. In terms of biological role, has antimicrobial activity. In Phyllomedusa trinitatis (Trinidad leaf frog), this protein is Dermaseptin-7.2TR.